Here is a 502-residue protein sequence, read N- to C-terminus: Cytochrome P450 71A8 (502 aa).

The chain crosses the membrane as a helical span at residues 16–36 (IISHTLAFQALVSLILLISIT). The interval 93 to 119 (PVSSRRRPRGNHENSRSRLRRPRGSRS) is disordered. A heme-binding site is contributed by cysteine 447.

Belongs to the cytochrome P450 family. Heme is required as a cofactor.

The protein resides in the membrane. In Mentha piperita (Peppermint), this protein is Cytochrome P450 71A8 (CYP71A8).